A 179-amino-acid polypeptide reads, in one-letter code: ATP synthase subunit delta (179 aa).

This sequence belongs to the ATPase delta chain family. In terms of assembly, F-type ATPases have 2 components, F(1) - the catalytic core - and F(0) - the membrane proton channel. F(1) has five subunits: alpha(3), beta(3), gamma(1), delta(1), epsilon(1). F(0) has three main subunits: a(1), b(2) and c(10-14). The alpha and beta chains form an alternating ring which encloses part of the gamma chain. F(1) is attached to F(0) by a central stalk formed by the gamma and epsilon chains, while a peripheral stalk is formed by the delta and b chains.

Its subcellular location is the cell membrane. In terms of biological role, f(1)F(0) ATP synthase produces ATP from ADP in the presence of a proton or sodium gradient. F-type ATPases consist of two structural domains, F(1) containing the extramembraneous catalytic core and F(0) containing the membrane proton channel, linked together by a central stalk and a peripheral stalk. During catalysis, ATP synthesis in the catalytic domain of F(1) is coupled via a rotary mechanism of the central stalk subunits to proton translocation. Functionally, this protein is part of the stalk that links CF(0) to CF(1). It either transmits conformational changes from CF(0) to CF(1) or is implicated in proton conduction. This is ATP synthase subunit delta from Clostridium botulinum (strain Okra / Type B1).